A 371-amino-acid polypeptide reads, in one-letter code: Geranylgeranyl transferase type-2 subunit alpha (371 aa).

PFTA repeat units follow at residues 45-79 (YSDE…NNYS), 92-126 (ILNQ…ELVK), 131-165 (NWKY…NMEL), 177-211 (INLD…KIYN), and 242-276 (LLKN…DDLF).

Belongs to the protein prenyltransferase subunit alpha family. In terms of assembly, heterodimer of an alpha and a beta subunit.

It catalyses the reaction geranylgeranyl diphosphate + L-cysteinyl-[protein] = S-geranylgeranyl-L-cysteinyl-[protein] + diphosphate. Functionally, catalyzes the transfer of a geranyl-geranyl moiety from geranyl-geranyl pyrophosphate to proteins having the C-terminal -XCC or -XCXC, where both cysteines may become modified. Acts on YPT1 and SEC4. This is Geranylgeranyl transferase type-2 subunit alpha (BET4) from Candida albicans (Yeast).